We begin with the raw amino-acid sequence, 650 residues long: Amyloid beta precursor like protein 1 (650 aa).

The signal sequence occupies residues 1-38; the sequence is MGPASPAARGLSRRPGQPPLPLLLPLLLLLLRAQPAIG. Topologically, residues 39 to 580 are extracellular; the sequence is SLAGGSPGAA…APAGTGVSRE (542 aa). The interval 50–146 is GFLD subdomain; that stretch reads APGSAQVAGL…PFRCLPGEFV (97 aa). The 163-residue stretch at 50–212 folds into the E1 domain; it reads APGSAQVAGL…RGVEYVCCPP (163 aa). 6 disulfides stabilise this stretch: C60–C84, C95–C140, C120–C128, C156–C210, C167–C197, and C181–C209. The tract at residues 154–212 is cuBD subdomain; that stretch reads EGCRFLHQERMDQCESSTRRHQEAQEACSSQGLILHGSGMLLPCGSDRFRGVEYVCCPP. H174 is a Cu(2+) binding site. Residues E206, C209, and C210 each coordinate Zn(2+). The tract at residues 214–287 is disordered; the sequence is GTPDPSGTAV…LAVVGKVTPT (74 aa). An O-linked (GalNAc...) threonine glycan is attached at T215. Residue S227 is glycosylated (O-linked (GalNAc...) serine). The O-linked (GalNAc...) threonine glycan is linked to T228. The segment at 285–305 is O-glycosylated at three sites; it reads TPTPRPTDGVDIYFGMPGEIS. The E2 domain occupies 293–484; it reads GVDIYFGMPG…QELRPQIQEL (192 aa). 2 heparin-binding regions span residues 310 to 342 and 410 to 441; these read FLRAKMDLEERRMRQINEVMREWAMADNQSKNL and LLALRRYLRAEQKEQRHTLRHYQHVAAVDPEK. N-linked (GlcNAc...) asparagine glycosylation is present at N337. Positions 442 to 459 are collagen-binding; it reads AQQMRFQVHTHLQVIEER. N461 carries an N-linked (GlcNAc...) asparagine glycan. The interval 492–546 is disordered; it reads PSELEAPAPGGSSEDKGGLQPPDSKDDTPMTLPKGSTEQDAASPEKEKMNPLEQY. Composition is skewed to basic and acidic residues over residues 504–519 and 534–546; these read SEDKGGLQPPDSKDDT and SPEKEKMNPLEQY. N551 carries N-linked (GlcNAc...) asparagine glycosylation. Residue H561 coordinates Cu(2+). H561 serves as a coordination point for Zn(2+). A helical membrane pass occupies residues 581–603; it reads AVSGLLIMGAGGGSLIVLSMLLL. Residues 604-615 carry the Basolateral sorting signal motif; that stretch reads RRKKPYGAISHG. Topologically, residues 604 to 650 are cytoplasmic; that stretch reads RRKKPYGAISHGVVEVDPMLTLEEQQLRELQRHGYENPTYRFLEERP. The segment at 632–649 is interaction with DAB1; it reads ELQRHGYENPTYRFLEER. The interaction with DAB2 stretch occupies residues 636-650; that stretch reads HGYENPTYRFLEERP. Positions 640 to 643 match the Clathrin-binding motif; it reads NPTY. Residues 640 to 643 carry the NPXY motif; contains endocytosis signal motif; the sequence is NPTY.

The protein belongs to the APP family. Monomer and homodimer. Heparin binding promotes homodimerization. Binds, via its C-terminus, to the PID domain of several cytoplasmic proteins, including APBB and APBA family members, MAPK8IP1 and DAB1. Binding to Dab1 inhibits its serine phosphorylation. Interacts with CPEB1. Interacts (via NPXY motif) with DAB2 (via PID domain); the interaction is impaired by tyrosine phosphorylation of the NPXY motif. Interacts (via NPXY motif) with DAB1. In terms of processing, proteolytically cleaved by caspases during neuronal apoptosis. Cleaved, in vitro, at Asp-620 by caspase-3. Post-translationally, N- and O-glycosylated. O-glycosylation with core 1 or possibly core 8 glycans. Glycosylation on Ser-227 is the preferred site to Thr-228. Expressed in the cerebral cortex where it is localized to the postsynaptic density (PSD).

It is found in the cell membrane. The protein localises to the cytoplasm. Functionally, may play a role in postsynaptic function. The C-terminal gamma-secretase processed fragment, ALID1, activates transcription activation through APBB1 (Fe65) binding. Couples to JIP signal transduction through C-terminal binding. May interact with cellular G-protein signaling pathways. Can regulate neurite outgrowth through binding to components of the extracellular matrix such as heparin and collagen I. Its function is as follows. The gamma-CTF peptide, C30, is a potent enhancer of neuronal apoptosis. The protein is Amyloid beta precursor like protein 1 (APLP1) of Homo sapiens (Human).